Reading from the N-terminus, the 191-residue chain is MNFLLTWIHWGLAALLYFHNAKVLQAAPAQGDGERQQGEVIPFLKVYERSICRPVETMVDIFQEYPDEVEYIFKPSCVALMRCGGCCNDEALECVPTEMYNVTMEVMKLKPFQSQHIHPVSFQQHSKCECRPKKDIRNKDNHCEPCSERRKHLYKQDPLTCKCSCKAPDLRCKSKQLELNERTCRCERPRR.

An N-terminal signal peptide occupies residues 1-26 (MNFLLTWIHWGLAALLYFHNAKVLQA). 3 cysteine pairs are disulfide-bonded: cysteine 52–cysteine 94, cysteine 83–cysteine 128, and cysteine 87–cysteine 130. Asparagine 101 is a glycosylation site (N-linked (GlcNAc...) asparagine).

This sequence belongs to the PDGF/VEGF growth factor family. In terms of assembly, homodimer; disulfide-linked. Also found as heterodimer with PGF. As to expression, expressed by the venom gland, and probably other tissues.

Its subcellular location is the secreted. Functionally, growth factor active in angiogenesis, vasculogenesis and endothelial cell growth. Induces endothelial cell proliferation, promotes cell migration, inhibits apoptosis and induces permeabilization of blood vessels. Binds to heparan sulfate and heparin. The sequence is that of Vascular endothelial growth factor A from Bitis gabonica (Gaboon adder).